The chain runs to 422 residues: Isocitrate dehydrogenase [NADP] (422 aa).

Residue Thr-94 coordinates NADP(+). 5 residues coordinate D-threo-isocitrate: Ser-103, Asn-105, Arg-109, Arg-119, and Arg-143. Residue Asp-310 coordinates Mg(2+). NADP(+) is bound by residues His-344–Tyr-350, Asn-357, Tyr-396, and Arg-400.

The protein belongs to the isocitrate and isopropylmalate dehydrogenases family. In terms of assembly, homodimer. Requires Mg(2+) as cofactor. Mn(2+) is required as a cofactor.

It catalyses the reaction D-threo-isocitrate + NADP(+) = 2-oxoglutarate + CO2 + NADPH. In terms of biological role, catalyzes the oxidative decarboxylation of isocitrate to 2-oxoglutarate and carbon dioxide with the concomitant reduction of NADP(+). This chain is Isocitrate dehydrogenase [NADP] (icd), found in Staphylococcus aureus (strain MSSA476).